Consider the following 503-residue polypeptide: Lysine--tRNA ligase (503 aa).

Mg(2+)-binding residues include Glu-414 and Glu-421.

It belongs to the class-II aminoacyl-tRNA synthetase family. As to quaternary structure, homodimer. Requires Mg(2+) as cofactor.

The protein resides in the cytoplasm. It catalyses the reaction tRNA(Lys) + L-lysine + ATP = L-lysyl-tRNA(Lys) + AMP + diphosphate. The protein is Lysine--tRNA ligase of Neisseria meningitidis serogroup B (strain ATCC BAA-335 / MC58).